Here is a 213-residue protein sequence, read N- to C-terminus: Ribosomal RNA small subunit methyltransferase G (213 aa).

S-adenosyl-L-methionine-binding positions include Gly-75, Phe-80, 128-129 (IE), and Arg-144.

Belongs to the methyltransferase superfamily. RNA methyltransferase RsmG family.

It localises to the cytoplasm. It carries out the reaction guanosine(527) in 16S rRNA + S-adenosyl-L-methionine = N(7)-methylguanosine(527) in 16S rRNA + S-adenosyl-L-homocysteine. Specifically methylates the N7 position of guanine in position 527 of 16S rRNA. The sequence is that of Ribosomal RNA small subunit methyltransferase G from Brucella suis biovar 1 (strain 1330).